The primary structure comprises 322 residues: GTP 3',8-cyclase (322 aa).

Residues 4 to 229 (NFNRNIDYLR…IPVQMKKSGP (226 aa)) form the Radical SAM core domain. Residue Arg-13 coordinates GTP. Residues Cys-20 and Cys-24 each coordinate [4Fe-4S] cluster. Tyr-26 lines the S-adenosyl-L-methionine pocket. Cys-27 is a binding site for [4Fe-4S] cluster. Residue Arg-64 participates in GTP binding. Position 68 (Gly-68) interacts with S-adenosyl-L-methionine. Thr-95 is a GTP binding site. Ser-119 contributes to the S-adenosyl-L-methionine binding site. Lys-156 serves as a coordination point for GTP. An S-adenosyl-L-methionine-binding site is contributed by Met-190. 2 residues coordinate [4Fe-4S] cluster: Cys-253 and Cys-256. Residue 258-260 (RLR) participates in GTP binding. Position 270 (Cys-270) interacts with [4Fe-4S] cluster.

The protein belongs to the radical SAM superfamily. MoaA family. In terms of assembly, monomer and homodimer. The cofactor is [4Fe-4S] cluster.

It carries out the reaction GTP + AH2 + S-adenosyl-L-methionine = (8S)-3',8-cyclo-7,8-dihydroguanosine 5'-triphosphate + 5'-deoxyadenosine + L-methionine + A + H(+). It participates in cofactor biosynthesis; molybdopterin biosynthesis. Its function is as follows. Catalyzes the cyclization of GTP to (8S)-3',8-cyclo-7,8-dihydroguanosine 5'-triphosphate. The sequence is that of GTP 3',8-cyclase from Thermodesulfovibrio yellowstonii (strain ATCC 51303 / DSM 11347 / YP87).